The following is a 341-amino-acid chain: Glyceraldehyde-3-phosphate dehydrogenase 3.1 (341 aa).

NAD(+)-binding positions include Arg13–Ile14, Asp35, and Arg85. Residues Ser157–Thr159, Thr188, Thr217–Gly218, and Arg240 each bind D-glyceraldehyde 3-phosphate. The active-site Nucleophile is the Cys158. Residue Asn322 coordinates NAD(+).

Belongs to the glyceraldehyde-3-phosphate dehydrogenase family. Homotetramer.

It localises to the cytoplasm. The catalysed reaction is D-glyceraldehyde 3-phosphate + phosphate + NAD(+) = (2R)-3-phospho-glyceroyl phosphate + NADH + H(+). Its pathway is carbohydrate degradation; glycolysis; pyruvate from D-glyceraldehyde 3-phosphate: step 1/5. This is Glyceraldehyde-3-phosphate dehydrogenase 3.1 from Caenorhabditis briggsae.